A 173-amino-acid chain; its full sequence is Large ribosomal subunit protein uL16 (173 aa).

Belongs to the universal ribosomal protein uL16 family.

This is Large ribosomal subunit protein uL16 from Methanococcus aeolicus (strain ATCC BAA-1280 / DSM 17508 / OCM 812 / Nankai-3).